Consider the following 610-residue polypeptide: UvrABC system protein C (610 aa).

The 79-residue stretch at Ser16 to Val94 folds into the GIY-YIG domain. The region spanning Asp204–Val239 is the UVR domain.

The protein belongs to the UvrC family. Interacts with UvrB in an incision complex.

The protein resides in the cytoplasm. Its function is as follows. The UvrABC repair system catalyzes the recognition and processing of DNA lesions. UvrC both incises the 5' and 3' sides of the lesion. The N-terminal half is responsible for the 3' incision and the C-terminal half is responsible for the 5' incision. The sequence is that of UvrABC system protein C from Salmonella typhi.